A 761-amino-acid polypeptide reads, in one-letter code: MTLATRTVTLPGGLQATLVHQPQADRAAALARVAAGSHHEPSRFPGLAHLLEHLLFYGGERYQDDDRLMGWVQRQGGSVNATTLARHSAFFFEVAADALADGVARLQEMLQAPLLLREDIQREVAVIDAEYRLIQQHEPSRREAAVRHAASAPAAFRRFQVGSADALAGDLAALQAALGDFHRTHYVARRMQLWLQGPQSLEALGELAARFAAGLAAGEAPPPAPPLRLGEFTALQLAVSSQPALWRCPLIALSDNVTLLREFLLDEAPGSLMAGLRQRRLAGDVALNWLYQDRHLGWLALVFASDRPEEVDRQITHWLQALQQTTPEQQQHYYQLSRRRFQALSPLDQLRQRAFGFAPGAPPAGFADFCAALQVAPSVSLACQTVSPGEPVATQGFSLPLSRWRRRPESDPALAFAFYPQAAGDLVAKCPEKAAPLLHLPSPGDPPRLLLRPPFYCSPDQAEGLARGEQLRPLLAALRHAGGHGEWHLFDGSWQLTLQLPEPGRRPEAILQAILRQLALPVASLTPSPESIAIRHLMAQLPERLGTSGHQKGWLAALAGGSAEDAQWVARQLSLITAPVNPPMPAPAPCRRGVERLVYPGGDTALLVFIPLPDGASLAALRLLAQHCEPLFFQRLRVEQQIGYVVSCRYQRVADRDGLLMALQSPDRRAGELLRCGKDFLRQLAPMDEATFRPLQQRLAAQIRASRPPEARALSALRQEYGLPELTPQAVDALRVAEVADLAREMTRRRRRWQVLFTTGD.

H49 contributes to the Zn(2+) binding site. Residue E52 is the Proton acceptor of the active site. Residues H53 and E130 each coordinate Zn(2+).

Belongs to the peptidase M16 family. The cofactor is Zn(2+).

It functions in the pathway cofactor biosynthesis; pyrroloquinoline quinone biosynthesis. Its function is as follows. Required for coenzyme pyrroloquinoline quinone (PQQ) biosynthesis. It is thought that this protein is a protease that cleaves peptides bond in a small peptide (gene pqqA), providing the glutamate and tyrosine residues which are necessary for the synthesis of PQQ. This Klebsiella pneumoniae protein is Coenzyme PQQ synthesis protein F (pqqF).